The sequence spans 178 residues: MTNKSVRDYIRTIVDFPHEGILFRDVTTLFADPRGFRIAIDQLLAPYAGMRFDKVAGLEARGFILGGAVAHQLSTGFVPIRKKGKLPGRTVSVSYQLEYGEAVVKVHDDAIQAGERILLVDDLLATGGTAEAGIRLIEQLGGEVVGCAFVVDLPDLGGRKKLEAMGMEVHALCAFEGL.

The protein belongs to the purine/pyrimidine phosphoribosyltransferase family. In terms of assembly, homodimer.

Its subcellular location is the cytoplasm. The catalysed reaction is AMP + diphosphate = 5-phospho-alpha-D-ribose 1-diphosphate + adenine. Its pathway is purine metabolism; AMP biosynthesis via salvage pathway; AMP from adenine: step 1/1. Its function is as follows. Catalyzes a salvage reaction resulting in the formation of AMP, that is energically less costly than de novo synthesis. In Cereibacter sphaeroides (strain ATCC 17025 / ATH 2.4.3) (Rhodobacter sphaeroides), this protein is Adenine phosphoribosyltransferase.